Consider the following 742-residue polypeptide: Phosphoribosylformylglycinamidine synthase subunit PurL (742 aa).

His-54 is an active-site residue. ATP is bound by residues Tyr-57 and Lys-96. A Mg(2+)-binding site is contributed by Glu-98. Residues 99–102 (SHNH) and Arg-121 contribute to the substrate site. The Proton acceptor role is filled by His-100. Residue Asp-122 participates in Mg(2+) binding. Gln-245 serves as a coordination point for substrate. Asp-273 contributes to the Mg(2+) binding site. Position 317–319 (317–319 (ESQ)) interacts with substrate. ATP is bound by residues Asp-500 and Gly-537. Residue Asn-538 participates in Mg(2+) binding. Ser-540 contacts substrate.

This sequence belongs to the FGAMS family. Monomer. Part of the FGAM synthase complex composed of 1 PurL, 1 PurQ and 2 PurS subunits.

Its subcellular location is the cytoplasm. The enzyme catalyses N(2)-formyl-N(1)-(5-phospho-beta-D-ribosyl)glycinamide + L-glutamine + ATP + H2O = 2-formamido-N(1)-(5-O-phospho-beta-D-ribosyl)acetamidine + L-glutamate + ADP + phosphate + H(+). It participates in purine metabolism; IMP biosynthesis via de novo pathway; 5-amino-1-(5-phospho-D-ribosyl)imidazole from N(2)-formyl-N(1)-(5-phospho-D-ribosyl)glycinamide: step 1/2. Part of the phosphoribosylformylglycinamidine synthase complex involved in the purines biosynthetic pathway. Catalyzes the ATP-dependent conversion of formylglycinamide ribonucleotide (FGAR) and glutamine to yield formylglycinamidine ribonucleotide (FGAM) and glutamate. The FGAM synthase complex is composed of three subunits. PurQ produces an ammonia molecule by converting glutamine to glutamate. PurL transfers the ammonia molecule to FGAR to form FGAM in an ATP-dependent manner. PurS interacts with PurQ and PurL and is thought to assist in the transfer of the ammonia molecule from PurQ to PurL. The chain is Phosphoribosylformylglycinamidine synthase subunit PurL from Geobacillus thermodenitrificans (strain NG80-2).